Reading from the N-terminus, the 282-residue chain is Undecaprenyl-diphosphatase (282 aa).

7 helical membrane passes run 1–21 (MTLFESIVLGVVQGLTEFLPV), 40–60 (GAAFTAVVQLGTLAAVLIYFY), 85–105 (AAMGWMIAVGTLPIVICGLLF), 117–137 (YWVSGALIGFALLLLVAEWSV), 196–216 (FSFLLSLPSVFAAALFELYHT), 229–249 (AITAATITAGITGYLSIAFLI), and 258–278 (SIFIIYRIILGAGILSLIAAG).

The protein belongs to the UppP family.

The protein localises to the cell inner membrane. The enzyme catalyses di-trans,octa-cis-undecaprenyl diphosphate + H2O = di-trans,octa-cis-undecaprenyl phosphate + phosphate + H(+). Functionally, catalyzes the dephosphorylation of undecaprenyl diphosphate (UPP). Confers resistance to bacitracin. The sequence is that of Undecaprenyl-diphosphatase from Chlorobium phaeobacteroides (strain DSM 266 / SMG 266 / 2430).